We begin with the raw amino-acid sequence, 387 residues long: 3-ketoacyl-CoA thiolase (387 aa).

Cys91 serves as the catalytic Acyl-thioester intermediate. Residues His343 and Cys373 each act as proton acceptor in the active site.

This sequence belongs to the thiolase-like superfamily. Thiolase family. Heterotetramer of two alpha chains (FadB) and two beta chains (FadA).

The protein localises to the cytoplasm. It carries out the reaction an acyl-CoA + acetyl-CoA = a 3-oxoacyl-CoA + CoA. The protein operates within lipid metabolism; fatty acid beta-oxidation. In terms of biological role, catalyzes the final step of fatty acid oxidation in which acetyl-CoA is released and the CoA ester of a fatty acid two carbons shorter is formed. The sequence is that of 3-ketoacyl-CoA thiolase from Photobacterium profundum (strain SS9).